Reading from the N-terminus, the 605-residue chain is Alpha-fetoprotein (605 aa).

The N-terminal stretch at 1-18 (MKWITPASLILLLHFAAS) is a signal peptide. 3 consecutive Albumin domains span residues 19 to 207 (KALH…SIAK), 208 to 398 (ELRE…EELQ), and 399 to 597 (KHIE…KLIS). Intrachain disulfides connect cysteine 95/cysteine 110, cysteine 109/cysteine 120, cysteine 144/cysteine 189, cysteine 188/cysteine 197, cysteine 220/cysteine 266, cysteine 265/cysteine 273, cysteine 285/cysteine 299, and cysteine 298/cysteine 309. Residues serine 107, serine 111, and serine 113 each carry the phosphoserine modification. A glycan (N-linked (GlcNAc...) asparagine) is linked at asparagine 247. Serine 340 carries the phosphoserine modification. 7 disulfides stabilise this stretch: cysteine 380-cysteine 389, cysteine 412-cysteine 458, cysteine 457-cysteine 468, cysteine 481-cysteine 497, cysteine 496-cysteine 507, cysteine 534-cysteine 579, and cysteine 578-cysteine 587. Position 440 is a phosphoserine (serine 440). Residue asparagine 498 is glycosylated (N-linked (GlcNAc...) asparagine).

Belongs to the ALB/AFP/VDB family. Post-translationally, glycosylated; contains two glycans. Sulfated. Plasma.

It localises to the secreted. Functionally, binds estrogens, fatty acids and metals. The sequence is that of Alpha-fetoprotein (Afp) from Mus musculus (Mouse).